A 391-amino-acid chain; its full sequence is Anhydro-N-acetylmuramic acid kinase (391 aa).

Residue 9–16 (GTSYDAVE) participates in ATP binding.

It belongs to the anhydro-N-acetylmuramic acid kinase family.

It carries out the reaction 1,6-anhydro-N-acetyl-beta-muramate + ATP + H2O = N-acetyl-D-muramate 6-phosphate + ADP + H(+). Its pathway is amino-sugar metabolism; 1,6-anhydro-N-acetylmuramate degradation. It participates in cell wall biogenesis; peptidoglycan recycling. In terms of biological role, catalyzes the specific phosphorylation of 1,6-anhydro-N-acetylmuramic acid (anhMurNAc) with the simultaneous cleavage of the 1,6-anhydro ring, generating MurNAc-6-P. Is required for the utilization of anhMurNAc either imported from the medium or derived from its own cell wall murein, and thus plays a role in cell wall recycling. The protein is Anhydro-N-acetylmuramic acid kinase of Streptomyces coelicolor (strain ATCC BAA-471 / A3(2) / M145).